Consider the following 205-residue polypeptide: GTP cyclohydrolase-2 (205 aa).

49-53 (RLHSE) is a GTP binding site. Residues Cys54, Cys65, and Cys67 each contribute to the Zn(2+) site. Residues Gln70, 92–94 (EGR), and Thr114 each bind GTP. Asp126 acts as the Proton acceptor in catalysis. Arg128 (nucleophile) is an active-site residue. Residues Thr149 and Lys154 each coordinate GTP.

It belongs to the GTP cyclohydrolase II family. The cofactor is Zn(2+).

The catalysed reaction is GTP + 4 H2O = 2,5-diamino-6-hydroxy-4-(5-phosphoribosylamino)-pyrimidine + formate + 2 phosphate + 3 H(+). It functions in the pathway cofactor biosynthesis; riboflavin biosynthesis; 5-amino-6-(D-ribitylamino)uracil from GTP: step 1/4. Its function is as follows. Catalyzes the conversion of GTP to 2,5-diamino-6-ribosylamino-4(3H)-pyrimidinone 5'-phosphate (DARP), formate and pyrophosphate. The polypeptide is GTP cyclohydrolase-2 (Pseudomonas putida (strain W619)).